A 251-amino-acid polypeptide reads, in one-letter code: tRNA pseudouridine synthase A (251 aa).

Asp-52 serves as the catalytic Nucleophile. A substrate-binding site is contributed by Tyr-113.

This sequence belongs to the tRNA pseudouridine synthase TruA family. In terms of assembly, homodimer.

It catalyses the reaction uridine(38/39/40) in tRNA = pseudouridine(38/39/40) in tRNA. Formation of pseudouridine at positions 38, 39 and 40 in the anticodon stem and loop of transfer RNAs. The chain is tRNA pseudouridine synthase A from Brucella anthropi (strain ATCC 49188 / DSM 6882 / CCUG 24695 / JCM 21032 / LMG 3331 / NBRC 15819 / NCTC 12168 / Alc 37) (Ochrobactrum anthropi).